The sequence spans 82 residues: RNA-binding protein Hfq (82 aa).

Positions 10-70 (DAFLNQVRKD…ISTVAPLRPI (61 aa)) constitute a Sm domain.

The protein belongs to the Hfq family. In terms of assembly, homohexamer.

RNA chaperone that binds small regulatory RNA (sRNAs) and mRNAs to facilitate mRNA translational regulation in response to envelope stress, environmental stress and changes in metabolite concentrations. Also binds with high specificity to tRNAs. The polypeptide is RNA-binding protein Hfq (Syntrophomonas wolfei subsp. wolfei (strain DSM 2245B / Goettingen)).